Here is a 1912-residue protein sequence, read N- to C-terminus: Receptor-type tyrosine-protein phosphatase delta (1912 aa).

A signal peptide spans 1 to 20 (MVPVARPLSLLLTFFLCACA). Residues 21–1266 (ETPPRFTRTP…PQPITDEEEG (1246 aa)) are Extracellular-facing. Ig-like C2-type domains are found at residues 24 to 114 (PRFT…TRLT) and 126 to 224 (PTID…ANLY). Disulfide bonds link Cys45–Cys98 and Cys147–Cys207. The interval 181–189 (ESIGGTPIR) is mini-exon peptide A9; sufficient for interaction with IL1RAPL1. The mini-exon peptide B; required for interaction with SLITRK2 and in the function in pre-synaptic differentiation; Acts as an adjustable linker to control relative positions and orientations of the PTPRD second and third immunoglobilin domains for their simultaneous interactions with the first immunoglobilin domain of IL1RAPL1 and IL1RAP; Modulates affinity for IL1RAPL1 and IL1RAP stretch occupies residues 227–230 (ELRE). Positions 236 to 318 (PRFSIPPTNH…GVIEAIAQIT (83 aa)) constitute an Ig-like C2-type 3 domain. Residues Asn254 and Asn299 are each glycosylated (N-linked (GlcNAc...) asparagine). Cys257 and Cys302 are oxidised to a cystine. Fibronectin type-III domains follow at residues 325 to 415 (PPGT…TSEQ), 420 to 516 (APRD…TGVP), 518 to 607 (QPLN…TMQS), 612 to 709 (PPQD…TDED), 714 to 822 (PPRK…TTGA), 823 to 916 (VPGK…VPEE), 921 to 1016 (FPQN…TLPV), and 1020 to 1106 (FAKN…TAPD). 2 N-linked (GlcNAc...) asparagine glycosylation sites follow: Asn724 and Asn832. A helical transmembrane segment spans residues 1267-1287 (LIWVVGPVLAVVFIICIVIAI). The Cytoplasmic portion of the chain corresponds to 1288–1912 (LLYKRKRAES…YLGSFDHYAT (625 aa)). Residues 1298–1319 (ESRKSSLPNSKEVPSHHPTDPV) are disordered. Basic and acidic residues predominate over residues 1310 to 1319 (VPSHHPTDPV). Tyrosine-protein phosphatase domains follow at residues 1357–1612 (FSQE…LLEA) and 1644–1903 (MELE…ALEY). Substrate contacts are provided by residues Asp1521, 1553 to 1559 (CSAGVGR), and Gln1597. Residue Cys1553 is the Phosphocysteine intermediate of the active site. Catalysis depends on Cys1844, which acts as the Phosphocysteine intermediate.

It belongs to the protein-tyrosine phosphatase family. Receptor class 2A subfamily. As to quaternary structure, interacts with PPFIA1, PPFIA2 and PPFIA3. Interacts (via extracellular domain) with SLITRK4 (via LRR 1 and 2 repeats). Interacts with SLITRK2; induces presynaptic differentiation. Interacts (via the second immunoglobilin domain) with IL1RAPL1 (via the first immunoglobilin domain); induces pre- and postsynaptic differentiation of neurons and synapse formation. Isoform G, isoform H, isoform I, isoform J, and isoform K do not interact with IL1RAPL1. Interacts (via the third immunoglobilin domain) with IL1RAP (via the first immunoglobilin domain); induces pre- and postsynaptic differentiation of neurons. A cleavage occurs, separating the extracellular domain from the transmembrane segment. This process called 'ectodomain shedding' is thought to be involved in receptor desensitization, signal transduction and/or membrane localization. As to expression, brain, kidney, heart, and some B-cell lines.

Its subcellular location is the membrane. It catalyses the reaction O-phospho-L-tyrosyl-[protein] + H2O = L-tyrosyl-[protein] + phosphate. Functionally, can bidirectionally induce pre- and post-synaptic differentiation of neurons by mediating interaction with IL1RAP and IL1RAPL1 trans-synaptically. Involved in pre-synaptic differentiation through interaction with SLITRK2. The protein is Receptor-type tyrosine-protein phosphatase delta (Ptprd) of Mus musculus (Mouse).